Reading from the N-terminus, the 220-residue chain is 7-cyano-7-deazaguanine synthase (220 aa).

ATP is bound at residue 10–20 (FSGGQDSTTCL). Zn(2+) is bound by residues cysteine 186, cysteine 195, cysteine 198, and cysteine 201.

It belongs to the QueC family. Homodimer. The cofactor is Zn(2+).

The enzyme catalyses 7-carboxy-7-deazaguanine + NH4(+) + ATP = 7-cyano-7-deazaguanine + ADP + phosphate + H2O + H(+). It participates in purine metabolism; 7-cyano-7-deazaguanine biosynthesis. Catalyzes the ATP-dependent conversion of 7-carboxy-7-deazaguanine (CDG) to 7-cyano-7-deazaguanine (preQ(0)). The sequence is that of 7-cyano-7-deazaguanine synthase from Bacillus anthracis (strain A0248).